A 1357-amino-acid chain; its full sequence is DNA-directed RNA polymerase subunit beta (1357 aa).

It belongs to the RNA polymerase beta chain family. The RNAP catalytic core consists of 2 alpha, 1 beta, 1 beta' and 1 omega subunit. When a sigma factor is associated with the core the holoenzyme is formed, which can initiate transcription.

It carries out the reaction RNA(n) + a ribonucleoside 5'-triphosphate = RNA(n+1) + diphosphate. DNA-dependent RNA polymerase catalyzes the transcription of DNA into RNA using the four ribonucleoside triphosphates as substrates. The sequence is that of DNA-directed RNA polymerase subunit beta from Pseudomonas putida (strain W619).